A 172-amino-acid polypeptide reads, in one-letter code: Dehydratase cfoI (172 aa).

Catalysis depends on residues H86 and H111.

Belongs to the scytalone dehydratase family. Homotrimer. Each subunit contains an active site, located in the central part of the hydrophobic core of the monomer, which functions independently.

Its pathway is secondary metabolite biosynthesis; flavonoid biosynthesis. Functionally, cytochrome P450 monooxygenase; part of the gene cluster that mediates the biosynthesis of chlorflavonin, a fungal flavonoid with acetolactate synthase inhibitory activity. Within the pathway, cfoI is responsible for the hydroxylation of the flavonoid skeleton at position C3 with cfoF. The pathway begins with the PKS-NRPS hybrid synthetase cfoA that uses benzoic acid or p-hydroxybenzoic acid as a starter unit with four rounds of chain elongation using malonyl-CoA to form the chalcone skeleton. Then, a new type of chalcone isomerase, cfoK, catalyzes the conversion of the chalcone into a flavanone by a histidine-mediated oxa-Michael addition mechanism. The desaturation of flavanone to flavone is catalyzed by a new type of flavone synthase, the flavin mononucleotide (FMN)-dependent oxidoreductase cfoJ. Monooxygenases cfoF, cfoG, and P450 cfoH are responsible for the hydroxylation of the flavonoid skeleton at sites C3, C8, and C2', respectively. Like cfoF, the dehydratase cfoI plays also a role in the hydroxylation of position C3. Methyltransferases cfoB, cfoC, and cfoD then catalyze the methylation of C7-OH, C8-OH, and C3-OH, respectively. Finally, the monooxygenase cfoE is responsible for the chlorination of flavonoid at position C3'. The protein is Dehydratase cfoI of Aspergillus candidus.